The primary structure comprises 200 residues: Phospholipase A2 inhibitor gamma subunit B (200 aa).

Positions 1–19 (MKFLLFCCLFGTFLATGMC) are cleaved as a signal peptide. Disulfide bonds link C22–C46, C25–C32, C39–C67, C73–C94, C95–C100, C120–C145, C138–C165, and C171–C191. Residue N31 is glycosylated (N-linked (GlcNAc...) asparagine).

Belongs to the CNF-like-inhibitor family. Heterodimer of subunit A and subunit B. N-glycosylated. Expressed by the liver. Not expressed in esophagus, stomach, pancreas, spleen, gall bladder, small intestine, rectum, kidney, trachea, lung, testis and body fat.

The protein resides in the secreted. Inhibits the enzymatic activity of phospholipase A2 (PA2). The sequence is that of Phospholipase A2 inhibitor gamma subunit B from Elaphe quadrivirgata (Japanese four-lined ratsnake).